Here is a 108-residue protein sequence, read N- to C-terminus: Histone H4 (108 aa).

Residues methionine 1–threonine 36 form a disordered region. Over residues glycine 9–valine 19 the composition is skewed to gly residues.

The protein belongs to the histone H4 family. As to quaternary structure, the nucleosome is a histone octamer containing two molecules each of H2A, H2B, H3 and H4 assembled in one H3-H4 heterotetramer and two H2A-H2B heterodimers. The octamer wraps approximately 147 bp of DNA.

The protein resides in the nucleus. It is found in the chromosome. In terms of biological role, core component of nucleosome. Nucleosomes wrap and compact DNA into chromatin, limiting DNA accessibility to the cellular machineries which require DNA as a template. Histones thereby play a central role in transcription regulation, DNA repair, DNA replication and chromosomal stability. DNA accessibility is regulated via a complex set of post-translational modifications of histones, also called histone code, and nucleosome remodeling. This chain is Histone H4 (H4a), found in Dictyostelium discoideum (Social amoeba).